We begin with the raw amino-acid sequence, 329 residues long: Ketol-acid reductoisomerase (NADP(+)) (329 aa).

One can recognise a KARI N-terminal Rossmann domain in the interval Val2–Thr182. Residues Tyr25 to Gln28, Ser51, and Ser53 each bind NADP(+). Residue His108 is part of the active site. Gly134 is a binding site for NADP(+). In terms of domain architecture, KARI C-terminal knotted spans Thr183–Ile328. Positions 191, 195, 227, and 231 each coordinate Mg(2+). Residue Ser252 coordinates substrate.

This sequence belongs to the ketol-acid reductoisomerase family. Requires Mg(2+) as cofactor.

It carries out the reaction (2R)-2,3-dihydroxy-3-methylbutanoate + NADP(+) = (2S)-2-acetolactate + NADPH + H(+). The catalysed reaction is (2R,3R)-2,3-dihydroxy-3-methylpentanoate + NADP(+) = (S)-2-ethyl-2-hydroxy-3-oxobutanoate + NADPH + H(+). The protein operates within amino-acid biosynthesis; L-isoleucine biosynthesis; L-isoleucine from 2-oxobutanoate: step 2/4. Its pathway is amino-acid biosynthesis; L-valine biosynthesis; L-valine from pyruvate: step 2/4. In terms of biological role, involved in the biosynthesis of branched-chain amino acids (BCAA). Catalyzes an alkyl-migration followed by a ketol-acid reduction of (S)-2-acetolactate (S2AL) to yield (R)-2,3-dihydroxy-isovalerate. In the isomerase reaction, S2AL is rearranged via a Mg-dependent methyl migration to produce 3-hydroxy-3-methyl-2-ketobutyrate (HMKB). In the reductase reaction, this 2-ketoacid undergoes a metal-dependent reduction by NADPH to yield (R)-2,3-dihydroxy-isovalerate. The polypeptide is Ketol-acid reductoisomerase (NADP(+)) (Frankia casuarinae (strain DSM 45818 / CECT 9043 / HFP020203 / CcI3)).